The following is a 366-amino-acid chain: UDP-N-acetylglucosamine--N-acetylmuramyl-(pentapeptide) pyrophosphoryl-undecaprenol N-acetylglucosamine transferase (366 aa).

UDP-N-acetyl-alpha-D-glucosamine-binding positions include 14 to 16 (TGG), N125, R168, S196, and Q297.

The protein belongs to the glycosyltransferase 28 family. MurG subfamily.

The protein resides in the cell inner membrane. The enzyme catalyses di-trans,octa-cis-undecaprenyl diphospho-N-acetyl-alpha-D-muramoyl-L-alanyl-D-glutamyl-meso-2,6-diaminopimeloyl-D-alanyl-D-alanine + UDP-N-acetyl-alpha-D-glucosamine = di-trans,octa-cis-undecaprenyl diphospho-[N-acetyl-alpha-D-glucosaminyl-(1-&gt;4)]-N-acetyl-alpha-D-muramoyl-L-alanyl-D-glutamyl-meso-2,6-diaminopimeloyl-D-alanyl-D-alanine + UDP + H(+). The protein operates within cell wall biogenesis; peptidoglycan biosynthesis. In terms of biological role, cell wall formation. Catalyzes the transfer of a GlcNAc subunit on undecaprenyl-pyrophosphoryl-MurNAc-pentapeptide (lipid intermediate I) to form undecaprenyl-pyrophosphoryl-MurNAc-(pentapeptide)GlcNAc (lipid intermediate II). The protein is UDP-N-acetylglucosamine--N-acetylmuramyl-(pentapeptide) pyrophosphoryl-undecaprenol N-acetylglucosamine transferase of Rhodopseudomonas palustris (strain BisB5).